Here is a 1462-residue protein sequence, read N- to C-terminus: FYVE, RhoGEF and PH domain-containing protein 5 (1462 aa).

Disordered regions lie at residues 37–323 (GRLP…SAEE), 492–512 (YVPE…APGI), 592–613 (SGSF…SSMV), 670–718 (HVDV…ASES), 746–777 (EDRS…YENI), and 851–887 (CPIS…THKV). Basic and acidic residues predominate over residues 72-82 (PLREDEPKDEG). Acidic residues-rich tracts occupy residues 95-106 (SAEEEEEREEGG) and 137-151 (EGTD…EGCA). The span at 161 to 177 (SRSEEEEKLVQPHRECS) shows a compositional bias: basic and acidic residues. Composition is skewed to acidic residues over residues 211–220 (GEAEEDDEEG) and 242–255 (MGQD…EPPE). Positions 592–611 (SGSFSQRNHLPSSGTSTPSS) are enriched in polar residues. A compositionally biased stretch (low complexity) spans 676-685 (SSSRSSSESS). Basic and acidic residues predominate over residues 858-887 (PKEDLTSDEEQRSSEEEDSASRDPSVTHKV). Positions 892-1084 (RALVIAQELL…SKVTDRANDS (193 aa)) constitute a DH domain. In terms of domain architecture, PH 1 spans 1113–1207 (EFLKEGTLMK…WYGCLSRALP (95 aa)). The FYVE-type zinc-finger motif lies at 1242–1301 (VTHVMMCMNCGCDFSLTLRRHHCHACGKIVCRNCSRNKYPLKYLKDRMAKVCDGCFGELK). Residues Cys-1248, Cys-1251, Cys-1264, Cys-1267, Cys-1272, Cys-1275, Cys-1293, and Cys-1296 each contribute to the Zn(2+) site. The 99-residue stretch at 1363 to 1461 (GSAISGYLSR…WIEAMEDASV (99 aa)) folds into the PH 2 domain.

Expressed in endothelial cells (at protein level).

The protein resides in the cytoplasm. The protein localises to the cytoskeleton. Its subcellular location is the cell projection. It is found in the ruffle membrane. It localises to the endoplasmic reticulum. The protein resides in the golgi apparatus. The protein localises to the early endosome. Functionally, activates CDC42, a member of the Ras-like family of Rho- and Rac proteins, by exchanging bound GDP for free GTP. Mediates VEGF-induced CDC42 activation. May regulate proangiogenic action of VEGF in vascular endothelial cells, including network formation, directional movement and proliferation. May play a role in regulating the actin cytoskeleton and cell shape. The chain is FYVE, RhoGEF and PH domain-containing protein 5 (FGD5) from Homo sapiens (Human).